A 150-amino-acid polypeptide reads, in one-letter code: uncharacterized protein (150 aa).

Positions 3-145 (VAILSGSVYG…DAEPWLAEFA (143 aa)) constitute a Flavodoxin-like domain.

The protein belongs to the flavodoxin family. MioC subfamily. The cofactor is FMN.

Its function is as follows. Probable electron transporter. This is an uncharacterized protein from Pseudomonas aeruginosa (strain ATCC 15692 / DSM 22644 / CIP 104116 / JCM 14847 / LMG 12228 / 1C / PRS 101 / PAO1).